The following is a 127-amino-acid chain: Glycine cleavage system H protein (127 aa).

Residues 22–104 (QVVIGITHFA…YEGAWMVKVE (83 aa)) form the Lipoyl-binding domain. Residue lysine 63 is modified to N6-lipoyllysine.

The protein belongs to the GcvH family. In terms of assembly, the glycine cleavage system is composed of four proteins: P, T, L and H. The cofactor is (R)-lipoate.

Its function is as follows. The glycine cleavage system catalyzes the degradation of glycine. The H protein shuttles the methylamine group of glycine from the P protein to the T protein. In terms of biological role, is also involved in protein lipoylation via its role as an octanoyl/lipoyl carrier protein intermediate. This chain is Glycine cleavage system H protein, found in Bacillus cytotoxicus (strain DSM 22905 / CIP 110041 / 391-98 / NVH 391-98).